The primary structure comprises 336 residues: Foldase protein PrsA (336 aa).

An N-terminal signal peptide occupies residues 1–22 (MKSAKKLLSVLCLGIFILTFTA). Residue Cys-23 is the site of N-palmitoyl cysteine attachment. Cys-23 carries the S-diacylglycerol cysteine lipid modification. The PpiC domain maps to 194 to 286 (PNTMNVSHIL…WGYHIIKINS (93 aa)).

This sequence belongs to the PrsA family.

The protein resides in the cell membrane. The catalysed reaction is [protein]-peptidylproline (omega=180) = [protein]-peptidylproline (omega=0). Plays a major role in protein secretion by helping the post-translocational extracellular folding of several secreted proteins. This is Foldase protein PrsA from Clostridium botulinum (strain Langeland / NCTC 10281 / Type F).